A 406-amino-acid polypeptide reads, in one-letter code: 4-hydroxy-3-methylbut-2-en-1-yl diphosphate synthase (flavodoxin) (406 aa).

The [4Fe-4S] cluster site is built by cysteine 297, cysteine 300, cysteine 343, and glutamate 350.

It belongs to the IspG family. The cofactor is [4Fe-4S] cluster.

The catalysed reaction is (2E)-4-hydroxy-3-methylbut-2-enyl diphosphate + oxidized [flavodoxin] + H2O + 2 H(+) = 2-C-methyl-D-erythritol 2,4-cyclic diphosphate + reduced [flavodoxin]. The protein operates within isoprenoid biosynthesis; isopentenyl diphosphate biosynthesis via DXP pathway; isopentenyl diphosphate from 1-deoxy-D-xylulose 5-phosphate: step 5/6. In terms of biological role, converts 2C-methyl-D-erythritol 2,4-cyclodiphosphate (ME-2,4cPP) into 1-hydroxy-2-methyl-2-(E)-butenyl 4-diphosphate. This chain is 4-hydroxy-3-methylbut-2-en-1-yl diphosphate synthase (flavodoxin), found in Thermus thermophilus (strain ATCC 27634 / DSM 579 / HB8).